Reading from the N-terminus, the 195-residue chain is Iron-sulfur flavoprotein AF_1519 (195 aa).

The [4Fe-4S] cluster site is built by Cys-45, Cys-48, Cys-51, and Cys-57.

Belongs to the SsuE family. Isf subfamily. In terms of assembly, homodimer. Requires FMN as cofactor. It depends on [4Fe-4S] cluster as a cofactor.

Redox-active protein probably involved in electron transport. The protein is Iron-sulfur flavoprotein AF_1519 of Archaeoglobus fulgidus (strain ATCC 49558 / DSM 4304 / JCM 9628 / NBRC 100126 / VC-16).